Reading from the N-terminus, the 173-residue chain is Nanos homolog 3 (173 aa).

The interval 23–51 is disordered; that stretch reads KEGPETRLSPQPEPEPMLEPDQKRSLESS. The Nanos-type zinc-finger motif lies at 57–111; it reads LCSFCKHNGESRAIYQSHVLKDEAGRVLCPILRDYVCPQCGATRERAHTRRFCPL. 8 residues coordinate Zn(2+): cysteine 58, cysteine 61, histidine 74, cysteine 85, cysteine 93, cysteine 96, histidine 104, and cysteine 109. 2 consecutive short sequence motifs (C2HC) follow at residues 58–85 and 93–109; these read CSFC…RVLC and CPQC…RRFC. Residues 123–173 are disordered; sequence TTRNSAGKKLVRPDKAKTQDTGHRRGGGGGAGFRGAGKSEPSPSCSPSMST. Residues 133–145 are compositionally biased toward basic and acidic residues; the sequence is VRPDKAKTQDTGH. A compositionally biased stretch (low complexity) spans 161-173; the sequence is SEPSPSCSPSMST.

The protein belongs to the nanos family. As to quaternary structure, binds mRNA from germ cells. Interacts with PUM2. As to expression, ovary, testis and brain (at protein level). In the ovaries, expressed during multiple stages of oogenesis, including primordial, primary, secondary and antral follicles with the highest expression in the oocytes. In the testis, expressed in germ cells, type A spermatogonia (SA), primary spermatocytes (S1), round spermatids (S3) and elongated spermatids.

The protein localises to the nucleus. Its subcellular location is the cytoplasm. The protein resides in the stress granule. It is found in the P-body. Functionally, plays a role in the maintenance of the undifferentiated state of germ cells regulating the spermatogonia cell cycle and inducing a prolonged transit in G1 phase. Affects cell proliferation probably by repressing translation of specific mRNAs. Maintains the germ cell lineage by suppressing both Bax-dependent and -independent apoptotic pathways. Essential in the early stage embryo to protect the migrating primordial germ cells (PGCs) from apoptosis. The chain is Nanos homolog 3 (NANOS3) from Homo sapiens (Human).